The primary structure comprises 356 residues: L-lactate dehydrogenase A (356 aa).

NAD(+) contacts are provided by residues 75–80 and R121; that span reads DALPDK. Substrate-binding residues include R128, N160, and R191. N160 contacts NAD(+). Residue H215 is the Proton acceptor of the active site. T270 contacts substrate.

The protein belongs to the LDH/MDH superfamily. LDH family. As to quaternary structure, tetramer that arise from random association of LDH-A and LDH-B.

The catalysed reaction is (S)-lactate + NAD(+) = pyruvate + NADH + H(+). It functions in the pathway fermentation; pyruvate fermentation to lactate; (S)-lactate from pyruvate: step 1/1. The protein is L-lactate dehydrogenase A of Hordeum vulgare (Barley).